The following is a 208-amino-acid chain: MTGKKRSASSSRWLHEHFSDKYVQQAQKKGLRSRAWFKLDEIQQSDKLFKPGMTVVDLGAAPGGWSQYVVTQIGGKGRIIACDLLPMDPIVGVDFLQGDFRDELVMKALLERVGDSKVQVVMSDMAPNMSGTPAVDIPRAMYLVELALEMCRDVLAPGGSFVVKVFQGEGFDEYLREIRSLFTKVKVRKPDSSRARSREVYIVATGRK.

The S-adenosyl-L-methionine site is built by Gly-63, Trp-65, Asp-83, Asp-99, and Asp-124. The Proton acceptor role is filled by Lys-164.

It belongs to the class I-like SAM-binding methyltransferase superfamily. RNA methyltransferase RlmE family.

The protein resides in the cytoplasm. It carries out the reaction uridine(2552) in 23S rRNA + S-adenosyl-L-methionine = 2'-O-methyluridine(2552) in 23S rRNA + S-adenosyl-L-homocysteine + H(+). Its function is as follows. Specifically methylates the uridine in position 2552 of 23S rRNA at the 2'-O position of the ribose in the fully assembled 50S ribosomal subunit. The protein is Ribosomal RNA large subunit methyltransferase E of Salmonella choleraesuis (strain SC-B67).